We begin with the raw amino-acid sequence, 355 residues long: MKIRIDIPHHPYDIQIEKGCMAQAGQWLRELWQPQKVVIVTDNHVASLYAEKVKLSLEDAGFQVAVFDFLEGEERKNLTTVQKVYEFLVKQGLTRSDGIVALGGGVVGDLAGFVASTYMRGIHFVQIPTSLTAQVDSSIGGKTGVNTPFAKNMVGTFAQPDGVLIDPLVLETLGKRELIEGMGEVIKYGLIEDPELWALLTGLNGSVESILEHAETLIEHSCQVKRKMVVEDELDNGIRLYLNFGHTIGHAIEATAGYGKVMHGEAVAMGMVQISKVAEEKGLMPAGITQSITEMCQKFGLPVDYENWEVGKLYQALTHDKKARGNTLKLVLVPELGSATIHPVSLEEMKDYLVK.

NAD(+)-binding positions include 71 to 76 (EGEERK), 105 to 109 (GVVGD), 129 to 130 (TS), lysine 142, and lysine 151. Glutamate 184, histidine 246, and histidine 263 together coordinate Zn(2+).

It belongs to the sugar phosphate cyclases superfamily. Dehydroquinate synthase family. NAD(+) is required as a cofactor. Co(2+) serves as cofactor. It depends on Zn(2+) as a cofactor.

It is found in the cytoplasm. It catalyses the reaction 7-phospho-2-dehydro-3-deoxy-D-arabino-heptonate = 3-dehydroquinate + phosphate. Its pathway is metabolic intermediate biosynthesis; chorismate biosynthesis; chorismate from D-erythrose 4-phosphate and phosphoenolpyruvate: step 2/7. Catalyzes the conversion of 3-deoxy-D-arabino-heptulosonate 7-phosphate (DAHP) to dehydroquinate (DHQ). The chain is 3-dehydroquinate synthase from Streptococcus pneumoniae serotype 4 (strain ATCC BAA-334 / TIGR4).